The primary structure comprises 233 residues: UPF0725 protein At4g17990 (233 aa).

Belongs to the UPF0725 (EMB2204) family.

The protein is UPF0725 protein At4g17990 of Arabidopsis thaliana (Mouse-ear cress).